We begin with the raw amino-acid sequence, 592 residues long: Methionine--tRNA ligase (592 aa).

The short motif at 12–22 (PYANGPFHVGH) is the 'HIGH' region element. Residues Cys144, Cys147, Cys157, and Cys160 each contribute to the Zn(2+) site. The 'KMSKS' region signature appears at 342–346 (KMSTS). Residue Thr345 participates in ATP binding.

This sequence belongs to the class-I aminoacyl-tRNA synthetase family. MetG type 1 subfamily. Monomer. It depends on Zn(2+) as a cofactor.

It localises to the cytoplasm. The catalysed reaction is tRNA(Met) + L-methionine + ATP = L-methionyl-tRNA(Met) + AMP + diphosphate. Functionally, is required not only for elongation of protein synthesis but also for the initiation of all mRNA translation through initiator tRNA(fMet) aminoacylation. In Roseiflexus sp. (strain RS-1), this protein is Methionine--tRNA ligase.